A 961-amino-acid polypeptide reads, in one-letter code: Mitogen-activated protein kinase kinase kinase 13-B (961 aa).

Positions 89-115 are disordered; sequence RDQDEPENTAPQGSSHSGDGGNNSANE. A compositionally biased stretch (low complexity) spans 101–114; it reads GSSHSGDGGNNSAN. The Protein kinase domain occupies 171 to 412; sequence ISELQWLGSG…FRQILMHLDI (242 aa). ATP-binding positions include 177–185 and K198; that span reads LGSGAQGAV. The active-site Proton acceptor is the D282. Leucine-zipper stretches follow at residues 436 to 457 and 489 to 510; these read VKKH…DEEL and LSSI…EQTV. Residues 460–497 are a coiled coil; sequence RRREELRHALDIREHYERKLERANNLYMELSSIMLQLE. 3 disordered regions span residues 507 to 644, 796 to 874, and 933 to 961; these read EQTV…ETSQ, TPPA…DVAC, and NAES…SSTW. A compositionally biased stretch (low complexity) spans 563-580; sequence AEGSAASASPISGSPKTS. The segment covering 586–598 has biased composition (basic residues); sequence GRYRSKPRHRRGN. Positions 613–628 are enriched in low complexity; it reads QESPAPSQQSSQHQTP. A compositionally biased stretch (acidic residues) spans 813–826; that stretch reads DSSEGEEGEVDSEV. The acidic stretch occupies residues 814-827; sequence SSEGEEGEVDSEVE. The segment covering 839 to 854 has biased composition (polar residues); the sequence is STCQSYSTFSSENFSV. A compositionally biased stretch (acidic residues) spans 934–945; sequence AESDCDSSEGEC. The segment covering 949–961 has biased composition (polar residues); that stretch reads TVRTNNPVNSSTW.

The protein belongs to the protein kinase superfamily. Ser/Thr protein kinase family.

The protein resides in the cytoplasm. It localises to the membrane. The enzyme catalyses L-seryl-[protein] + ATP = O-phospho-L-seryl-[protein] + ADP + H(+). It carries out the reaction L-threonyl-[protein] + ATP = O-phospho-L-threonyl-[protein] + ADP + H(+). May have a role in the JNK signaling pathway. The protein is Mitogen-activated protein kinase kinase kinase 13-B (map3k13-b) of Xenopus laevis (African clawed frog).